We begin with the raw amino-acid sequence, 922 residues long: Alpha-actinin, sarcomeric (922 aa).

Residues 1 to 252 (MMENGGYVGQ…IMTYVSCYYH (252 aa)) are actin-binding. 2 consecutive Calponin-homology (CH) domains span residues 36–140 (KQQK…LRFA) and 149–255 (MTAK…HAFQ). 4 Spectrin repeats span residues 253–393 (AFQG…MVSD), 394–508 (ITNS…RCQR), 509–629 (ICDQ…SADL), and 630–742 (ISRK…TMET). EF-hand domains lie at 776–811 (EQLT…LGYS) and 817–852 (QGDM…ESTD). Positions 789, 791, 793, 795, and 800 each coordinate Ca(2+).

It belongs to the alpha-actinin family. Homodimer; antiparallel.

In terms of biological role, F-actin cross-linking protein which is thought to anchor actin to a variety of intracellular structures. This is a bundling protein. This chain is Alpha-actinin, sarcomeric (Actn), found in Anopheles gambiae (African malaria mosquito).